The following is a 338-amino-acid chain: Elongation factor Ts, mitochondrial (338 aa).

The N-terminal 42 residues, 1–42 (MSPSIAMFTLTPNARALASKTSKMDLIKNLRERTGAPIVDVK), are a transit peptide targeting the mitochondrion.

It belongs to the EF-Ts family.

The protein resides in the mitochondrion. In terms of biological role, associates with the EF-Tu.GDP complex and induces the exchange of GDP to GTP. It remains bound to the aminoacyl-tRNA.EF-Tu.GTP complex up to the GTP hydrolysis stage on the ribosome. In Ostreococcus tauri, this protein is Elongation factor Ts, mitochondrial.